The sequence spans 100 residues: Small ribosomal subunit protein uS14c (100 aa).

Belongs to the universal ribosomal protein uS14 family. In terms of assembly, part of the 30S ribosomal subunit.

It localises to the plastid. The protein localises to the chloroplast. In terms of biological role, binds 16S rRNA, required for the assembly of 30S particles. This is Small ribosomal subunit protein uS14c from Psilotum nudum (Whisk fern).